A 446-amino-acid polypeptide reads, in one-letter code: MRPVRENSSGARSPRVPADLARSILISLPFPPDSLAHRPPSSAPTESQGLFTVAAPAPGAPSPPATLAHLLPAPAMYSLLETELKNPVGTPTQAAGTGGPAAPGGAGKSSANAAGGANSGGGSSGGASGGGGGTDQDRVKRPMNAFMVWSRGQRRKMALENPKMHNSEISKRLGADWKLLTDAEKRPFIDEAKRLRAVHMKEYPDYKYRPRRKTKTLLKKDKYSLPSGLLPPGAAAAAAAAAAAAAAASSPVGVGQRLDTYTHVNGWANGAYSLVQEQLGYAQPPSMSSPPPPPALPPMHRYDMAGLQYSPMMPPGAQSYMNVAAAAAAASGYGGMAPSATAAAAAAYGQQPATAAAAAAAAAAMSLGPMGSVVKSEPSSPPPAIASHSQRACLGDLRDMISMYLPPGGDAADAASPLPGGRLHGVHQHYQGAGTAVNGTVPLTHI.

Disordered stretches follow at residues 29–48 (PFPP…TESQ) and 87–140 (PVGT…DRVK). Composition is skewed to gly residues over residues 96–107 (GTGGPAAPGGAG) and 117–134 (ANSG…GGGT). A DNA-binding region (HMG box) is located at residues 139-207 (VKRPMNAFMV…VHMKEYPDYK (69 aa)). Positions 399 to 407 (DMISMYLPP) match the 9aaTAD motif.

In terms of assembly, interacts with SOX2 and FGFR1.

It localises to the nucleus. Transcription factor required during the formation of the hypothalamo-pituitary axis. May function as a switch in neuronal development. Keeps neural cells undifferentiated by counteracting the activity of proneural proteins and suppresses neuronal differentiation. Required also within the pharyngeal epithelia for craniofacial morphogenesis. Controls a genetic switch in male development. Is necessary for initiating male sex determination by directing the development of supporting cell precursors (pre-Sertoli cells) as Sertoli rather than granulosa cells. This Homo sapiens (Human) protein is Transcription factor SOX-3 (SOX3).